A 354-amino-acid polypeptide reads, in one-letter code: Methionine import ATP-binding protein MetN (354 aa).

Residues 8–250 enclose the ABC transporter domain; the sequence is LDHIDITFHQ…PKEALTQEFI (243 aa). 42 to 49 is a binding site for ATP; that stretch reads GYSGAGKS.

Belongs to the ABC transporter superfamily. Methionine importer (TC 3.A.1.24) family. As to quaternary structure, the complex is composed of two ATP-binding proteins (MetN), two transmembrane proteins (MetI) and a solute-binding protein (MetQ).

The protein resides in the cell membrane. It catalyses the reaction L-methionine(out) + ATP + H2O = L-methionine(in) + ADP + phosphate + H(+). The enzyme catalyses D-methionine(out) + ATP + H2O = D-methionine(in) + ADP + phosphate + H(+). Its function is as follows. Part of the ABC transporter complex MetNIQ involved in methionine import. Responsible for energy coupling to the transport system. The protein is Methionine import ATP-binding protein MetN of Streptococcus pyogenes serotype M4 (strain MGAS10750).